The following is a 248-amino-acid chain: Triosephosphate isomerase (248 aa).

Position 9 to 11 (9 to 11) interacts with substrate; that stretch reads NWK. The Electrophile role is filled by His94. Glu166 acts as the Proton acceptor in catalysis. Substrate-binding positions include Gly172, Ser211, and 232-233; that span reads GG.

It belongs to the triosephosphate isomerase family. Homodimer.

It localises to the cytoplasm. It carries out the reaction D-glyceraldehyde 3-phosphate = dihydroxyacetone phosphate. It participates in carbohydrate biosynthesis; gluconeogenesis. It functions in the pathway carbohydrate degradation; glycolysis; D-glyceraldehyde 3-phosphate from glycerone phosphate: step 1/1. Its function is as follows. Involved in the gluconeogenesis. Catalyzes stereospecifically the conversion of dihydroxyacetone phosphate (DHAP) to D-glyceraldehyde-3-phosphate (G3P). The sequence is that of Triosephosphate isomerase from Vesicomyosocius okutanii subsp. Calyptogena okutanii (strain HA).